Consider the following 63-residue polypeptide: Male-specific sperm protein Mst84Da (63 aa).

This sequence belongs to the MST(3)CGP family. In terms of tissue distribution, testis.

This is Male-specific sperm protein Mst84Da (Mst84Da) from Drosophila melanogaster (Fruit fly).